The sequence spans 294 residues: 4-hydroxy-tetrahydrodipicolinate synthase (294 aa).

Thr-45 contributes to the pyruvate binding site. Residue Tyr-133 is the Proton donor/acceptor of the active site. Lys-162 functions as the Schiff-base intermediate with substrate in the catalytic mechanism. Residue Val-204 participates in pyruvate binding.

This sequence belongs to the DapA family. As to quaternary structure, homotetramer; dimer of dimers.

It is found in the cytoplasm. The enzyme catalyses L-aspartate 4-semialdehyde + pyruvate = (2S,4S)-4-hydroxy-2,3,4,5-tetrahydrodipicolinate + H2O + H(+). It functions in the pathway amino-acid biosynthesis; L-lysine biosynthesis via DAP pathway; (S)-tetrahydrodipicolinate from L-aspartate: step 3/4. Its function is as follows. Catalyzes the condensation of (S)-aspartate-beta-semialdehyde [(S)-ASA] and pyruvate to 4-hydroxy-tetrahydrodipicolinate (HTPA). In Bartonella bacilliformis (strain ATCC 35685 / KC583 / Herrer 020/F12,63), this protein is 4-hydroxy-tetrahydrodipicolinate synthase.